A 229-amino-acid chain; its full sequence is Endo-1,4-beta-xylanase 1 (229 aa).

An N-terminal signal peptide occupies residues 1 to 19 (MVAFSSLICALTSIASTLA). The propeptide occupies 20–51 (MPTGLEPESSVNVTERGMYDFVLGAHNDHRRR). Asn31 carries N-linked (GlcNAc...) asparagine glycosylation. The GH11 domain maps to 42–228 (LGAHNDHRRR…GSGSASQSVS (187 aa)). Tyr117 is a substrate binding site. Glu126 serves as the catalytic Nucleophile. Tyr128, Arg160, Pro164, Gln174, and Tyr209 together coordinate substrate. Glu215 serves as the catalytic Proton donor.

This sequence belongs to the glycosyl hydrolase 11 (cellulase G) family.

The protein localises to the secreted. The catalysed reaction is Endohydrolysis of (1-&gt;4)-beta-D-xylosidic linkages in xylans.. It functions in the pathway glycan degradation; xylan degradation. Glycoside hydrolase involved in the hydrolysis of xylan, a major plant cell wall hemicellulose made up of 1,4-beta-linked D-xylopyranose residues. Catalyzes the endohydrolysis of the main-chain 1,4-beta-glycosidic bonds connecting the xylose subunits yielding various xylooligosaccharides and xylose. The polypeptide is Endo-1,4-beta-xylanase 1 (Hypocrea jecorina (strain QM6a) (Trichoderma reesei)).